A 603-amino-acid polypeptide reads, in one-letter code: Vacuolar protein sorting-associated protein 33A (603 aa).

It belongs to the STXBP/unc-18/SEC1 family. As to quaternary structure, probable component of the homotypic fusion and vacuole protein sorting (HOPS) complex consisting of the core class C Vps proteins vps-11, vps-16, vps-18, and which further associates with vps-33.1, vps-39 and vps-41. Interacts with spe-39. As to expression, ubiquitously expressed at high levels in somatic tissues including the pharynx, muscles, hypodermis, neurons, coelomocytes and spermatheca. Expressed in the intestine.

Its subcellular location is the lysosome. The protein localises to the early endosome. It is found in the late endosome. The protein resides in the apical cell membrane. Plays a role in vesicle-mediated protein trafficking to lysosomal compartments including the endocytic membrane transport pathways. Believed to act as a component of the putative HOPS endosomal tethering complex which is proposed to be involved in the rab-5-to-rab-7 endosome conversion probably implicating sand-1, and via binding SNAREs and SNARE complexes to mediate tethering and docking events during SNARE-mediated membrane fusion. The HOPS complex is proposed to be recruited to rab-7 on the late endosomal membrane and to regulate late endocytic, phagocytic and autophagic traffic towards lysosomes. Within the HOPS complex, contributes to the normal development of gut granules in embryonic and adult intestinal cells. Required for endosome/lysosome fusion. Required for early embryonic development. The protein is Vacuolar protein sorting-associated protein 33A of Caenorhabditis elegans.